The sequence spans 180 residues: Large ribosomal subunit protein eL20 (180 aa).

It belongs to the eukaryotic ribosomal protein eL20 family.

This Caenorhabditis elegans protein is Large ribosomal subunit protein eL20.